The sequence spans 208 residues: Adult-specific cuticular protein ACP-20 (208 aa).

Positions 1–17 are cleaved as a signal peptide; it reads MLVQITALAFLAGIASA. Repeat unit 1 spans residues 34 to 43; it reads GLGGGLGGVG. A 2 X 10 AA repeats region spans residues 34 to 180; sequence GLGGGLGGVG…GLGGGLGGVG (147 aa). The region spanning 64–135 is the Chitin-binding type R&amp;R domain; that stretch reads PAHYQFKYGV…VGHAVHPQVL (72 aa). Residues 171 to 180 form repeat 2; that stretch reads GLGGGLGGVG.

Epidermal regions synthesizing hard cuticle.

In terms of biological role, cuticular proteins play a significant role in determining the physical properties of cuticles. This chain is Adult-specific cuticular protein ACP-20 (ACP20), found in Tenebrio molitor (Yellow mealworm beetle).